The following is a 1028-amino-acid chain: RNA cytidine acetyltransferase 1 (1028 aa).

Residues 286–295 (GRGKSAALGL) and Arg460 each bind ATP. Residues 548-731 (VLLGPVDESK…FAPFYISQIP (184 aa)) form the N-acetyltransferase domain. Acetyl-CoA-binding positions include 619 to 621 (IAV), 626 to 632 (MKMGYGS), and Lys719. Residues 989-1028 (ISIESTKTDNKKEKPSGFDKSAKKRGNDKHSSTSNKKRRA) form a disordered region. Positions 994-1009 (TKTDNKKEKPSGFDKS) are enriched in basic and acidic residues.

The protein belongs to the RNA cytidine acetyltransferase family. NAT10 subfamily.

The protein localises to the nucleus. Its subcellular location is the nucleolus. It carries out the reaction a cytidine in 18S rRNA + acetyl-CoA + ATP + H2O = an N(4)-acetylcytidine in 18S rRNA + ADP + phosphate + CoA + H(+). The enzyme catalyses a cytidine in tRNA + acetyl-CoA + ATP + H2O = an N(4)-acetylcytidine in tRNA + ADP + phosphate + CoA + H(+). In terms of biological role, RNA cytidine acetyltransferase with specificity toward both 18S rRNA and tRNAs. Catalyzes the formation of N(4)-acetylcytidine (ac4C) in 18S rRNA. Required for early nucleolar cleavages of precursor rRNA at sites A0, A1 and A2 during 18S rRNA synthesis. Catalyzes the formation of ac4C in serine and leucine tRNAs. Requires a tRNA-binding adapter protein for full tRNA acetyltransferase activity but not for 18S rRNA acetylation. In Arabidopsis thaliana (Mouse-ear cress), this protein is RNA cytidine acetyltransferase 1.